Consider the following 83-residue polypeptide: Colicin-E5 immunity protein in ColE9 (83 aa).

This chain is Colicin-E5 immunity protein in ColE9, found in Escherichia coli.